Consider the following 609-residue polypeptide: Glutamine--fructose-6-phosphate aminotransferase [isomerizing] (609 aa).

Cysteine 2 serves as the catalytic Nucleophile; for GATase activity. The Glutamine amidotransferase type-2 domain occupies 2–218; that stretch reads CGIVGAIAQR…EGDIAEITRR (217 aa). SIS domains are found at residues 286–426 and 458–599; these read ADEL…LKGL and LAED…VDQP. Lysine 604 serves as the catalytic For Fru-6P isomerization activity.

Homodimer.

The protein resides in the cytoplasm. It catalyses the reaction D-fructose 6-phosphate + L-glutamine = D-glucosamine 6-phosphate + L-glutamate. Catalyzes the first step in hexosamine metabolism, converting fructose-6P into glucosamine-6P using glutamine as a nitrogen source. This is Glutamine--fructose-6-phosphate aminotransferase [isomerizing] from Salmonella paratyphi A (strain ATCC 9150 / SARB42).